The following is a 112-amino-acid chain: Small ribosomal subunit protein bS6 (112 aa).

The protein belongs to the bacterial ribosomal protein bS6 family.

Functionally, binds together with bS18 to 16S ribosomal RNA. This chain is Small ribosomal subunit protein bS6, found in Christiangramia forsetii (strain DSM 17595 / CGMCC 1.15422 / KT0803) (Gramella forsetii).